A 95-amino-acid chain; its full sequence is Cell division protein FtsB (95 aa).

At 1-3 (MRL) the chain is on the cytoplasmic side. A helical membrane pass occupies residues 4–21 (FILILSAILLLFQYDLWF). Topologically, residues 22–95 (GKNGYLDYKE…RIAKENKDNR (74 aa)) are periplasmic. Residues 28–62 (DYKETAEEIAMHKAENTKLSQRNQVVAAEIRDLKD) are a coiled coil.

Belongs to the FtsB family. In terms of assembly, part of a complex composed of FtsB, FtsL and FtsQ.

It localises to the cell inner membrane. Functionally, essential cell division protein. May link together the upstream cell division proteins, which are predominantly cytoplasmic, with the downstream cell division proteins, which are predominantly periplasmic. The chain is Cell division protein FtsB from Mannheimia succiniciproducens (strain KCTC 0769BP / MBEL55E).